Consider the following 224-residue polypeptide: UPF0758 protein CBUD_1789 (224 aa).

The region spanning 102 to 224 (QLGCTQDAQQ…SFSFAESGLL (123 aa)) is the MPN domain. His173, His175, and Asp186 together coordinate Zn(2+). The JAMM motif motif lies at 173-186 (HNHPSGVPDPSQAD).

It belongs to the UPF0758 family.

This chain is UPF0758 protein CBUD_1789, found in Coxiella burnetii (strain Dugway 5J108-111).